A 66-amino-acid polypeptide reads, in one-letter code: MFTLKKSLLILFFLGTINFSLCEEERNAEEERRDDPEERDVEVEKRFLPLLLAGLPKLLCFLFKKC.

The signal sequence occupies residues 1-22 (MFTLKKSLLILFFLGTINFSLC). Residues 23–44 (EEERNAEEERRDDPEERDVEVE) constitute a propeptide that is removed on maturation. The cysteines at positions 60 and 66 are disulfide-linked.

Belongs to the frog skin active peptide (FSAP) family. Brevinin subfamily. In terms of tissue distribution, expressed by the skin glands.

It is found in the secreted. Its function is as follows. Antimicrobial peptide. The polypeptide is Brevinin-1CDYd (Rana dybowskii (Dybovsky's frog)).